Here is a 301-residue protein sequence, read N- to C-terminus: Recombination-associated protein RdgC (301 aa).

The protein belongs to the RdgC family.

Its subcellular location is the cytoplasm. It is found in the nucleoid. Its function is as follows. May be involved in recombination. This Xanthomonas oryzae pv. oryzae (strain MAFF 311018) protein is Recombination-associated protein RdgC.